Consider the following 2931-residue polypeptide: Probable polyketide synthase 9/36 (2931 aa).

The region spanning 11 to 442 is the Ketosynthase family 3 (KS3) domain; the sequence is EKGVAIVGIG…GSNCCLLISE (432 aa). Catalysis depends on for beta-ketoacyl synthase activity residues Cys-181, His-323, and His-362. Positions 635–668 are acyl/malonyl transferase; sequence GVNPSFILGHSLGEISASYCSGMIDLDTFCYTVY. The For acyl/malonyl transferase activity role is filled by Ser-645. An N-terminal hotdog fold region spans residues 925–1047; sequence IDHLGTSNSY…ANFQLLDHGN (123 aa). The region spanning 925–1209 is the PKS/mFAS DH domain; the sequence is IDHLGTSNSY…CKSLIPIKDS (285 aa). Catalysis depends on His-959, which acts as the Proton acceptor; for dehydratase activity. Residues 1064–1209 form a C-terminal hotdog fold region; sequence NLSKLTKNEL…CKSLIPIKDS (146 aa). Catalysis depends on Asp-1122, which acts as the Proton donor; for dehydratase activity. A helical transmembrane segment spans residues 2293-2313; that stretch reads LINFVMASSAISLIGSTDLCT. A Carrier domain is found at 2429–2506; sequence TGNKNIDELF…TSMKMILNSL (78 aa). Residue Ser-2466 is modified to O-(pantetheine 4'-phosphoryl)serine. The helical transmembrane segment at 2553-2573 threads the bilayer; sequence KIILLTGTTGFLGGFLLFNMV.

It depends on pantetheine 4'-phosphate as a cofactor.

It localises to the membrane. Functionally, probable polyketide synthase. The chain is Probable polyketide synthase 9/36 (pks9) from Dictyostelium discoideum (Social amoeba).